The primary structure comprises 283 residues: MILDLFRKQKYITVQPESETREIPEGVWVKCERCGEILFKKELDKNYKVCLKCGFHFRLSAFERIAMTVDEGSFKELDAALLPVNPFNLPDYESKLVSARQSTGLNEAVLTGEAAIEGYPAVVVVMDARFMMASMGTVVGEKITRAAEAAAAGRRPLIIFSASGGARMQEGILSLMQMAKTVAALARLGEEGQLYISVLTDPTTGGVSASFAALGDIVIAEPGALIGFAGPRVIEQTIRQKLPEGFQRAEFLKQHGFVDMIVPRPQMKETLARLLDLHLRGEK.

A CoA carboxyltransferase N-terminal domain is found at 27 to 283 (VWVKCERCGE…LLDLHLRGEK (257 aa)). Zn(2+) contacts are provided by cysteine 31, cysteine 34, cysteine 50, and cysteine 53. The segment at 31–53 (CERCGEILFKKELDKNYKVCLKC) adopts a C4-type zinc-finger fold.

It belongs to the AccD/PCCB family. Acetyl-CoA carboxylase is a heterohexamer composed of biotin carboxyl carrier protein (AccB), biotin carboxylase (AccC) and two subunits each of ACCase subunit alpha (AccA) and ACCase subunit beta (AccD). The cofactor is Zn(2+).

Its subcellular location is the cytoplasm. It catalyses the reaction N(6)-carboxybiotinyl-L-lysyl-[protein] + acetyl-CoA = N(6)-biotinyl-L-lysyl-[protein] + malonyl-CoA. It participates in lipid metabolism; malonyl-CoA biosynthesis; malonyl-CoA from acetyl-CoA: step 1/1. Functionally, component of the acetyl coenzyme A carboxylase (ACC) complex. Biotin carboxylase (BC) catalyzes the carboxylation of biotin on its carrier protein (BCCP) and then the CO(2) group is transferred by the transcarboxylase to acetyl-CoA to form malonyl-CoA. The protein is Acetyl-coenzyme A carboxylase carboxyl transferase subunit beta of Pelotomaculum thermopropionicum (strain DSM 13744 / JCM 10971 / SI).